Here is a 313-residue protein sequence, read N- to C-terminus: Porphobilinogen deaminase (313 aa).

Cys-242 bears the S-(dipyrrolylmethanemethyl)cysteine mark.

This sequence belongs to the HMBS family. Monomer. Dipyrromethane serves as cofactor.

The catalysed reaction is 4 porphobilinogen + H2O = hydroxymethylbilane + 4 NH4(+). Its pathway is porphyrin-containing compound metabolism; protoporphyrin-IX biosynthesis; coproporphyrinogen-III from 5-aminolevulinate: step 2/4. In terms of biological role, tetrapolymerization of the monopyrrole PBG into the hydroxymethylbilane pre-uroporphyrinogen in several discrete steps. The sequence is that of Porphobilinogen deaminase from Pseudomonas fluorescens (strain ATCC BAA-477 / NRRL B-23932 / Pf-5).